The following is a 141-amino-acid chain: Hemoglobin subunit beta (141 aa).

In terms of domain architecture, Globin spans 2–141 (HWSEVELHEI…VVDAISKEYH (140 aa)). His58 and His87 together coordinate heme b.

This sequence belongs to the globin family. As to quaternary structure, heterotetramer of two alpha chains and two beta chains. Red blood cells.

Functionally, involved in oxygen transport from the lung to the various peripheral tissues. This is Hemoglobin subunit beta (HBB) from Heterodontus portusjacksoni (Port Jackson shark).